A 284-amino-acid chain; its full sequence is BES1/BZR1 homolog protein 3 (284 aa).

Disordered stretches follow at residues 1 to 21 and 85 to 116; these read MTSGTRTPTWKERENNKRRER and GSTSASPCSSYQHSPRASYNPSPSSSSFPSPT. The required for DNA-binding stretch occupies residues 6–88; it reads RTPTWKEREN…RMDLMNGSTS (83 aa). Positions 85–97 are enriched in polar residues; sequence GSTSASPCSSYQH. Over residues 98–114 the composition is skewed to low complexity; that stretch reads SPRASYNPSPSSSSFPS. Residue Thr153 is modified to Phosphothreonine.

Belongs to the BZR/LAT61 family. In terms of processing, phosphorylated. Phosphorylation increases protein degradation.

This chain is BES1/BZR1 homolog protein 3 (BEH3), found in Arabidopsis thaliana (Mouse-ear cress).